The following is a 414-amino-acid chain: Stork-head box protein ham-1 (414 aa).

Positions 1–31 (MTYLAVVLNGPKAKNGRKVFDSFLEQNRQMF) are essential for association with cell cortex. The region spanning 93-170 (QQVEQMHFVP…MADHYFVSVP (78 aa)) is the Winged helix Storkhead-box1 domain. A disordered region spans residues 282–362 (ECQRKARRRN…SNEEAGSISD (81 aa)). A bi-partite nuclear localization signal region spans residues 285-295 (RKARRRNHPRR). Residues 321–327 (PTRRRAR) are nuclear localization signal. Residues 332-351 (LRSSTPNNSDSAYSISPPHT) show a composition bias toward polar residues.

The protein resides in the cytoplasm. It localises to the cell cortex. The protein localises to the nucleus. Probable transcription factor. Required for asymmetric cell division in neuroblasts, perhaps acting by regulating spindle positioning and myosin polarization, and thus the position of the cleavage plane. Required to produce daughter cell size asymmetry in neuroblasts undergoing asymmetric cell division, usually giving rise to one precursor cell and one apoptotic cell. Positively modulates expression of the serine/threonine kinase pig-1/MELK during asymmetric division of the Q.a neuroblast. Plays a role in neural fate specification in several dopaminergic lineages, including the hermaphrodite-specific neuron (HSN)/phasmid neuron (PHB), acting in concert with the kinase, ham-1, and the T-box protein tbx-2 and the homeobox protein egl-5. The protein is Stork-head box protein ham-1 of Caenorhabditis elegans.